A 660-amino-acid polypeptide reads, in one-letter code: Threonine--tRNA ligase (660 aa).

Residues 1-49 (MPINEIRVQKGQRYRDAINDKKVIAVKKGDKFLDLDEIAGEDEAVQPVY) form the TGS domain. The segment at 225–554 (DHRKIIAEMD…LLEHFAGKLP (330 aa)) is catalytic. 3 residues coordinate Zn(2+): Cys318, His369, and His531.

It belongs to the class-II aminoacyl-tRNA synthetase family. In terms of assembly, homodimer. It depends on Zn(2+) as a cofactor.

It is found in the cytoplasm. The enzyme catalyses tRNA(Thr) + L-threonine + ATP = L-threonyl-tRNA(Thr) + AMP + diphosphate + H(+). Catalyzes the attachment of threonine to tRNA(Thr) in a two-step reaction: L-threonine is first activated by ATP to form Thr-AMP and then transferred to the acceptor end of tRNA(Thr). In Thermoplasma volcanium (strain ATCC 51530 / DSM 4299 / JCM 9571 / NBRC 15438 / GSS1), this protein is Threonine--tRNA ligase.